The sequence spans 321 residues: Hydrolase 3 (321 aa).

The Involved in the stabilization of the negatively charged intermediate by the formation of the oxyanion hole signature appears at 80–82 (HGA). Active-site residues include serine 172 and aspartate 267.

This sequence belongs to the 'GDXG' lipolytic enzyme family.

It catalyses the reaction dihydroprecondylocarpine acetate + NADPH = (+)-vincadifformine + acetate + NADP(+). It participates in alkaloid biosynthesis. Its function is as follows. Component of the seco-iridoid and derivatives monoterpenoid indole alkaloids (MIAs, e.g. vincadifformine) biosynthesis pathway. Catalyzes the conversion of O-acetylstemmadenine (OAS) to vincadifformine. May also trigger the formation of additional unknown MIAs. This is Hydrolase 3 from Catharanthus roseus (Madagascar periwinkle).